Reading from the N-terminus, the 693-residue chain is Translation factor GUF1 homolog, mitochondrial (693 aa).

Over residues 51 to 63 (SSSSTEKPTTSGT) the composition is skewed to polar residues. Residues 51-78 (SSSSTEKPTTSGTINGGGGKQKAASQPK) form a disordered region. A tr-type G domain is found at 88 to 270 (QKIRNFSIIA…RIVQMVPPPP (183 aa)). GTP contacts are provided by residues 97-104 (AHIDHGKS), 163-167 (DTPGH), and 217-220 (NKID).

This sequence belongs to the TRAFAC class translation factor GTPase superfamily. Classic translation factor GTPase family. LepA subfamily.

It is found in the mitochondrion inner membrane. The catalysed reaction is GTP + H2O = GDP + phosphate + H(+). In terms of biological role, promotes mitochondrial protein synthesis. May act as a fidelity factor of the translation reaction, by catalyzing a one-codon backward translocation of tRNAs on improperly translocated ribosomes. Binds to mitochondrial ribosomes in a GTP-dependent manner. In Phaeodactylum tricornutum (strain CCAP 1055/1), this protein is Translation factor GUF1 homolog, mitochondrial.